The following is a 406-amino-acid chain: Succinylornithine transaminase (406 aa).

An N6-(pyridoxal phosphate)lysine modification is found at Lys252.

Belongs to the class-III pyridoxal-phosphate-dependent aminotransferase family. AstC subfamily. The cofactor is pyridoxal 5'-phosphate.

The catalysed reaction is N(2)-succinyl-L-ornithine + 2-oxoglutarate = N-succinyl-L-glutamate 5-semialdehyde + L-glutamate. It participates in amino-acid degradation; L-arginine degradation via AST pathway; L-glutamate and succinate from L-arginine: step 3/5. Functionally, catalyzes the transamination of N(2)-succinylornithine and alpha-ketoglutarate into N(2)-succinylglutamate semialdehyde and glutamate. Can also act as an acetylornithine aminotransferase. This is Succinylornithine transaminase from Shigella sonnei (strain Ss046).